We begin with the raw amino-acid sequence, 348 residues long: Holliday junction branch migration complex subunit RuvB (348 aa).

The interval 1-181 (MEERMITPQQ…FGVISRLEFY (181 aa)) is large ATPase domain (RuvB-L). 9 residues coordinate ATP: Leu-20, Arg-21, Gly-62, Lys-65, Thr-66, Thr-67, Arg-171, Tyr-181, and Arg-218. Residue Thr-66 coordinates Mg(2+). Residues 182–252 (EVEDLIRIIT…LAGKSLDRLE (71 aa)) form a small ATPAse domain (RuvB-S) region. Residues 255-348 (PAGLDRIDQK…GDSLFDAAED (94 aa)) are head domain (RuvB-H). DNA is bound by residues Arg-310 and Arg-315. A disordered region spans residues 329–348 (VNSSHQEGGQGDSLFDAAED).

This sequence belongs to the RuvB family. As to quaternary structure, homohexamer. Forms an RuvA(8)-RuvB(12)-Holliday junction (HJ) complex. HJ DNA is sandwiched between 2 RuvA tetramers; dsDNA enters through RuvA and exits via RuvB. An RuvB hexamer assembles on each DNA strand where it exits the tetramer. Each RuvB hexamer is contacted by two RuvA subunits (via domain III) on 2 adjacent RuvB subunits; this complex drives branch migration. In the full resolvosome a probable DNA-RuvA(4)-RuvB(12)-RuvC(2) complex forms which resolves the HJ.

The protein localises to the cytoplasm. It catalyses the reaction ATP + H2O = ADP + phosphate + H(+). In terms of biological role, the RuvA-RuvB-RuvC complex processes Holliday junction (HJ) DNA during genetic recombination and DNA repair, while the RuvA-RuvB complex plays an important role in the rescue of blocked DNA replication forks via replication fork reversal (RFR). RuvA specifically binds to HJ cruciform DNA, conferring on it an open structure. The RuvB hexamer acts as an ATP-dependent pump, pulling dsDNA into and through the RuvAB complex. RuvB forms 2 homohexamers on either side of HJ DNA bound by 1 or 2 RuvA tetramers; 4 subunits per hexamer contact DNA at a time. Coordinated motions by a converter formed by DNA-disengaged RuvB subunits stimulates ATP hydrolysis and nucleotide exchange. Immobilization of the converter enables RuvB to convert the ATP-contained energy into a lever motion, pulling 2 nucleotides of DNA out of the RuvA tetramer per ATP hydrolyzed, thus driving DNA branch migration. The RuvB motors rotate together with the DNA substrate, which together with the progressing nucleotide cycle form the mechanistic basis for DNA recombination by continuous HJ branch migration. Branch migration allows RuvC to scan DNA until it finds its consensus sequence, where it cleaves and resolves cruciform DNA. The sequence is that of Holliday junction branch migration complex subunit RuvB from Desulfitobacterium hafniense (strain DSM 10664 / DCB-2).